The following is a 302-amino-acid chain: NAD kinase 2 (302 aa).

D78 acts as the Proton acceptor in catalysis. Residues 78–79, 152–153, D182, 193–198, and A217 contribute to the NAD(+) site; these read DG, NE, and TAYALS.

It belongs to the NAD kinase family. A divalent metal cation is required as a cofactor.

The protein localises to the cytoplasm. It catalyses the reaction NAD(+) + ATP = ADP + NADP(+) + H(+). In terms of biological role, involved in the regulation of the intracellular balance of NAD and NADP, and is a key enzyme in the biosynthesis of NADP. Catalyzes specifically the phosphorylation on 2'-hydroxyl of the adenosine moiety of NAD to yield NADP. The sequence is that of NAD kinase 2 from Parasynechococcus marenigrum (strain WH8102).